The sequence spans 417 residues: MAEIKNYTLNFGPQHPAAHGVLRLVLELDGEVIQRADPHIGLLHRATEKLAESKTFIQSVPYMDRLDYVSMMVNEHGYVLAIEKLLGIEVPERAQYIRVLFDEITRVLNHLMWIGAHALDVGAMAVFLYAFREREDLMDVYEAVSGARMHAAYYRPGGVYRDLPDAMPQYKASKIRNEKALAKMNEARSGSVLDFIDDFFTRFPKCVDEYETLLTDNRIWKQRLVGIGVVSPERALQMGLTGPMLRGSGIAWDLRKKQPYEVYDRMDFDVPVGVNGDCYDRYLVRVEEMRQSIRIAKQCIEWLRKNPGPVMTDNHKVAPPSRVGMKTNMEDLIHHFKLFTEGFHVPEGEAYAAVEHPKGEFGIYLVSDGANKPYRLKIRAPGFAHLASLDEMARGHMIADAVTIIGTQDIVFGEIDR.

The protein belongs to the complex I 49 kDa subunit family. As to quaternary structure, NDH-1 is composed of 14 different subunits. Subunits NuoB, C, D, E, F, and G constitute the peripheral sector of the complex.

It localises to the cell inner membrane. It catalyses the reaction a quinone + NADH + 5 H(+)(in) = a quinol + NAD(+) + 4 H(+)(out). Its function is as follows. NDH-1 shuttles electrons from NADH, via FMN and iron-sulfur (Fe-S) centers, to quinones in the respiratory chain. The immediate electron acceptor for the enzyme in this species is believed to be ubiquinone. Couples the redox reaction to proton translocation (for every two electrons transferred, four hydrogen ions are translocated across the cytoplasmic membrane), and thus conserves the redox energy in a proton gradient. The chain is NADH-quinone oxidoreductase subunit D from Burkholderia cenocepacia (strain HI2424).